The following is a 287-amino-acid chain: ATP synthase gamma chain (287 aa).

The protein belongs to the ATPase gamma chain family. F-type ATPases have 2 components, CF(1) - the catalytic core - and CF(0) - the membrane proton channel. CF(1) has five subunits: alpha(3), beta(3), gamma(1), delta(1), epsilon(1). CF(0) has three main subunits: a, b and c.

It localises to the cell membrane. Functionally, produces ATP from ADP in the presence of a proton gradient across the membrane. The gamma chain is believed to be important in regulating ATPase activity and the flow of protons through the CF(0) complex. This chain is ATP synthase gamma chain, found in Bacillus velezensis (strain DSM 23117 / BGSC 10A6 / LMG 26770 / FZB42) (Bacillus amyloliquefaciens subsp. plantarum).